Here is a 117-residue protein sequence, read N- to C-terminus: Putative hydrolase fragment YghX (117 aa).

The interval 91–117 (DGLSSVGGYPGNDDKGRELQQQVDPTN) is disordered.

The sequence is that of Putative hydrolase fragment YghX (yghX) from Escherichia coli (strain K12).